The chain runs to 152 residues: Protein SprT-like (152 aa).

In terms of domain architecture, SprT-like spans 9 to 149; sequence LQKLTETISL…CGKCNGKLKE (141 aa). His-70 provides a ligand contact to Zn(2+). Glu-71 is a catalytic residue. Position 74 (His-74) interacts with Zn(2+).

It belongs to the SprT family. It depends on Zn(2+) as a cofactor.

It is found in the cytoplasm. This Staphylococcus saprophyticus subsp. saprophyticus (strain ATCC 15305 / DSM 20229 / NCIMB 8711 / NCTC 7292 / S-41) protein is Protein SprT-like.